Reading from the N-terminus, the 556-residue chain is Dihydroxy-acid dehydratase (556 aa).

Asp-78 provides a ligand contact to Mg(2+). Cys-119 is a [2Fe-2S] cluster binding site. Positions 120 and 121 each coordinate Mg(2+). The residue at position 121 (Lys-121) is an N6-carboxylysine. Cys-191 contacts [2Fe-2S] cluster. Residue Glu-442 participates in Mg(2+) binding. Ser-468 functions as the Proton acceptor in the catalytic mechanism.

Belongs to the IlvD/Edd family. Homodimer. Requires [2Fe-2S] cluster as cofactor. Mg(2+) is required as a cofactor.

The enzyme catalyses (2R)-2,3-dihydroxy-3-methylbutanoate = 3-methyl-2-oxobutanoate + H2O. It catalyses the reaction (2R,3R)-2,3-dihydroxy-3-methylpentanoate = (S)-3-methyl-2-oxopentanoate + H2O. The protein operates within amino-acid biosynthesis; L-isoleucine biosynthesis; L-isoleucine from 2-oxobutanoate: step 3/4. It participates in amino-acid biosynthesis; L-valine biosynthesis; L-valine from pyruvate: step 3/4. Functions in the biosynthesis of branched-chain amino acids. Catalyzes the dehydration of (2R,3R)-2,3-dihydroxy-3-methylpentanoate (2,3-dihydroxy-3-methylvalerate) into 2-oxo-3-methylpentanoate (2-oxo-3-methylvalerate) and of (2R)-2,3-dihydroxy-3-methylbutanoate (2,3-dihydroxyisovalerate) into 2-oxo-3-methylbutanoate (2-oxoisovalerate), the penultimate precursor to L-isoleucine and L-valine, respectively. The sequence is that of Dihydroxy-acid dehydratase from Clostridium beijerinckii (strain ATCC 51743 / NCIMB 8052) (Clostridium acetobutylicum).